We begin with the raw amino-acid sequence, 412 residues long: Autophagy-related protein 18 (412 aa).

WD repeat units lie at residues 100–139 (RFNKSVLTVRLNRDRIVVCLEDCIYIYNLKDMKMMHNIMD), 142–183 (TNKL…SVST), and 186–226 (AHEG…RLFE). Positions 227-230 (FRRG) match the L/FRRG motif motif. One copy of the WD 4 repeat lies at 232–271 (TRCVNIYSLCFSSDSKYLTSSSNTETVHVFKLEKTEGVDN). A disordered region spans residues 363–412 (HNIGPKSDTSRASPTSTGSGGAAKSAEASNQSVPNMDDPDDFPPMSHTSG). Positions 372-391 (SRASPTSTGSGGAAKSAEAS) are enriched in low complexity.

The protein belongs to the WD repeat PROPPIN family. In terms of tissue distribution, expressed in neurons and intestinal cells.

The protein localises to the cytoplasmic vesicle. It localises to the phagosome membrane. Its subcellular location is the cytoplasm. In terms of biological role, component of the autophagy machinery that is recruited to phosphatidylinositols on preautophagosomal structures, which are early autophagic structures, to promote autophagosome formation, and the subsequent degradation and clearance of engulfed apoptotic cells and P-granules in somatic cells. In particular, binds with high affinity to phosphatidylinositols including phosphatidylinositol 3-phosphate (PtdIns(3)P), phosphatidylinositol 4-phosphate (PtdIns(4)P), and phosphatidylinositol 5-phosphate (PtdIns(5)P), and more weakly to phosphatidylinositol 3,5-bisphosphate (PtdIns(3,5)P2). Plays a role in mitophagy, which is the autophagic consumption of mitochondria, in response to dietary restriction. Involved in xenophagy, the autophagy-mediated degradation of pathogens and pathogen products, such as toxins. Also plays a role in membrane-pore repair. In a daf-18/PTEN- and daf-16/FOXO-dependent manner, required for the proliferation of germ stem cell progenitors in the gonad during the late phases of larval development. By regulating the release of neurotransmitters and neuropeptides, involved in the control of lifespan in response to dietary restriction and daf-2 signaling. Probably through its involvement in autophagy, required for dauer formation. In Caenorhabditis elegans, this protein is Autophagy-related protein 18.